The primary structure comprises 284 residues: 4-diphosphocytidyl-2-C-methyl-D-erythritol kinase (284 aa).

K9 is an active-site residue. 90–100 (PLVSGLGGDSS) contacts ATP. D132 is an active-site residue.

This sequence belongs to the GHMP kinase family. IspE subfamily.

The catalysed reaction is 4-CDP-2-C-methyl-D-erythritol + ATP = 4-CDP-2-C-methyl-D-erythritol 2-phosphate + ADP + H(+). The protein operates within isoprenoid biosynthesis; isopentenyl diphosphate biosynthesis via DXP pathway; isopentenyl diphosphate from 1-deoxy-D-xylulose 5-phosphate: step 3/6. Catalyzes the phosphorylation of the position 2 hydroxy group of 4-diphosphocytidyl-2C-methyl-D-erythritol. This is 4-diphosphocytidyl-2-C-methyl-D-erythritol kinase from Dehalococcoides mccartyi (strain ATCC BAA-2100 / JCM 16839 / KCTC 5957 / BAV1).